Reading from the N-terminus, the 192-residue chain is Ras-like GTP-binding protein rhoA (192 aa).

Residue 12–19 participates in GTP binding; that stretch reads GDGACGKT. Positions 34 to 42 match the Effector region motif; it reads YVPTVFENY. GTP-binding positions include 59–63 and 117–120; these read DTAGQ and NKRD. Cys-189 bears the Cysteine methyl ester mark. Cys-189 carries S-geranylgeranyl cysteine lipidation. Residues 190-192 constitute a propeptide, removed in mature form; it reads MIL.

Belongs to the small GTPase superfamily. Rho family. As to quaternary structure, may interact with unc-89 (via DN and PH domains). Interacts with bli-3 and memo-1. In larvae and adults, enriched at the tip of the head where the anterior sensory organ is located and in the pharyngeal nerve ring (at protein level). In embryos, enriched at the boundaries of dorsal cells undergoing intercalation, ventral enclosure and elongation.

The protein localises to the cell membrane. It is found in the cytoplasm. The protein resides in the cytoskeleton. It localises to the cell cortex. With respect to regulation, GTP hydrolysis is stimulated by unc-89. Functionally, required for ventral migration of epidermal cells during ventral enclosure in the embryo and for cell elongation. Also required for ventral migration of P cells during larval development. Involved in asymmetric spindle positioning during anaphase and establishment of cell polarity during embryo development. In adults, involved in regulation of multiple processes including locomotion, pharyngeal pumping, fecundity, ovulation, defecation and body morphology. In body wall muscles, regulates organization of myosin thick filaments downstream of unc-89. Association with the oxidase bli-3 promotes ROS production and this interaction may be modulated by memo-1, in order to control the oxidative stress response and longevity. The chain is Ras-like GTP-binding protein rhoA from Caenorhabditis elegans.